A 508-amino-acid chain; its full sequence is 2,3-bisphosphoglycerate-independent phosphoglycerate mutase (508 aa).

The Mn(2+) site is built by aspartate 11 and serine 61. Residue serine 61 is the Phosphoserine intermediate of the active site. Substrate is bound by residues histidine 122, 150-151 (RD), arginine 182, arginine 188, 257-260 (RPDR), and lysine 332. Mn(2+) is bound by residues aspartate 397, histidine 401, aspartate 438, histidine 439, and histidine 456.

It belongs to the BPG-independent phosphoglycerate mutase family. In terms of assembly, monomer. The cofactor is Mn(2+).

It carries out the reaction (2R)-2-phosphoglycerate = (2R)-3-phosphoglycerate. The protein operates within carbohydrate degradation; glycolysis; pyruvate from D-glyceraldehyde 3-phosphate: step 3/5. In terms of biological role, catalyzes the interconversion of 2-phosphoglycerate and 3-phosphoglycerate. This is 2,3-bisphosphoglycerate-independent phosphoglycerate mutase from Mycoplasma pneumoniae (strain ATCC 29342 / M129 / Subtype 1) (Mycoplasmoides pneumoniae).